Consider the following 86-residue polypeptide: Insulin-related peptide 2 (86 aa).

A signal peptide spans 1 to 19 (MKFYIVFALILACAACVSS). Positions 20 to 43 (QEGTNFYCGRQLSRTLALVCWGAE) are excised as a propeptide. Arginine amide is present on Arg-63. Positions 67–86 (GPVDECCLKPCSIEEMLTYC) are excised as a propeptide.

This sequence belongs to the insulin family. As to expression, DAGWWVPPQSARALGGGR-amide: Expressed in corpora cardiaca (CC), corpora allata (CA), antennal lobe (AL) and gnathal ganglion (GNG) (at protein level). Expression in CC and CA detected in most animals, in AL in some animals and in GNG in few animals (at protein level).

It is found in the secreted. The polypeptide is Insulin-related peptide 2 (Agrotis ipsilon (Black cutworm moth)).